The sequence spans 231 residues: AA9 family lytic polysaccharide monooxygenase F (231 aa).

Residues 1 to 17 (MLPSISLLLAAALGTSA) form the signal peptide. His-18, Asp-50, and His-89 together coordinate Cu(2+). Position 50 (Asp-50) interacts with O2. Cystine bridges form between Cys-59/Cys-177 and Cys-147/Cys-231. Residues His-163 and Gln-172 each coordinate O2. A Cu(2+)-binding site is contributed by Tyr-174.

This sequence belongs to the polysaccharide monooxygenase AA9 family. Requires Cu(2+) as cofactor.

It is found in the secreted. It carries out the reaction [(1-&gt;4)-beta-D-glucosyl]n+m + reduced acceptor + O2 = 4-dehydro-beta-D-glucosyl-[(1-&gt;4)-beta-D-glucosyl]n-1 + [(1-&gt;4)-beta-D-glucosyl]m + acceptor + H2O.. Functionally, lytic polysaccharide monooxygenase (LPMO) that depolymerizes crystalline and amorphous polysaccharides via the oxidation of scissile alpha- or beta-(1-4)-glycosidic bonds, yielding C1 oxidation products. Catalysis by LPMOs requires the reduction of the active-site copper from Cu(II) to Cu(I) by a reducing agent and H(2)O(2) or O(2) as a cosubstrate. This chain is AA9 family lytic polysaccharide monooxygenase F (gh61-6), found in Neurospora crassa (strain ATCC 24698 / 74-OR23-1A / CBS 708.71 / DSM 1257 / FGSC 987).